The sequence spans 335 residues: Probable G-protein coupled receptor 174 (335 aa).

At 1 to 27 the chain is on the extracellular side; that stretch reads MTDNFTCNKTDGDNTDFRYFIYAVTYT. Asparagine 4 and asparagine 8 each carry an N-linked (GlcNAc...) asparagine glycan. The helical transmembrane segment at 28 to 48 threads the bilayer; the sequence is VILVPGLIGNILALWVFYGYM. Residues 49–53 are Cytoplasmic-facing; that stretch reads KETKR. The helical transmembrane segment at 54 to 74 threads the bilayer; the sequence is AVVFMINLAIADLLQILSLPL. The Extracellular portion of the chain corresponds to 75-91; it reads RIFYYLNHDWPFGPGLC. A disulfide bridge connects residues cysteine 91 and cysteine 168. A helical transmembrane segment spans residues 92–112; the sequence is MFCFYLKYVNMYASIYFLVCI. The Cytoplasmic portion of the chain corresponds to 113 to 134; that stretch reads SVRRFWFLMYPFRFNDCKQKYD. A helical transmembrane segment spans residues 135–155; it reads LYISIIGWLIICLACLLFPLL. At 156-182 the chain is on the extracellular side; that stretch reads RTNDDTPGNRTKCFVDLPIRNVNLAQS. Asparagine 164 carries N-linked (GlcNAc...) asparagine glycosylation. The helical transmembrane segment at 183 to 203 threads the bilayer; that stretch reads VAMITIGEVVGFVTPLMIVLY. Topologically, residues 204–231 are cytoplasmic; sequence CTWKTALSLQNKYPISQHLGEKKKALKM. The helical transmembrane segment at 232-252 threads the bilayer; sequence ILTCAGVFLVCFVPYHFSFPL. At 253–268 the chain is on the extracellular side; it reads DFLVKSNEIKSCFARR. A helical transmembrane segment spans residues 269 to 289; that stretch reads VILIFHSVALCLASLNSCLDP. Over 290 to 335 the chain is Cytoplasmic; it reads VIYYFTTNEFRRRLSRQDLPDNIQLHTKSYKIASNHATSTVAAELC.

This sequence belongs to the G-protein coupled receptor 1 family. In terms of assembly, interacts with GNA13. Interacts with CCL21. As to expression, expressed in spleen and, at low levels, in brain. Highly expressed in developing and mature regulatory T-cells.

The protein localises to the cell membrane. Functionally, G-protein-coupled receptor of lysophosphatidylserine (LysoPS) that plays different roles in immune response. Plays a negative role in regulatory T-cell accumulation and homeostasis. Under inflammatory conditions where LysoPS production increases, contributes to the down-regulation of regulatory T-cell activity to favor effector response. Mediates the suppression of IL-2 production in activated T-lymphocytes leading to inhibition of growth, proliferation and differentiation of T-cells. Mechanistically, acts via G(s)-containing heterotrimeric G proteins to trigger elevated cyclic AMP levels and protein kinase A/PKA activity, which may in turn act to antagonize proximal TCR signaling. Plays an important role in the initial period of sepsis through the regulation of macrophage polarization and pro- and anti-inflammatory cytokine secretions. Upon testosterone treatment, acts as a receptor for CCL21 and subsequently triggers through G(q)-alpha and G(12)/G(13) proteins a calcium flux leading to chemotactic effects on activated B-cells. Signals via GNA13 and PKA to promote CD86 up-regulation by follicular B-cells. In Mus musculus (Mouse), this protein is Probable G-protein coupled receptor 174 (Gpr174).